The primary structure comprises 373 residues: Arfaptin-1 (373 aa).

The segment at 1–47 (MAQESPKNSAAEIPVTSNGEVDDSREHSFNRDLKHSLPSGLGLSETQ) is disordered. A2 carries the post-translational modification N-acetylalanine. Residues S5, S28, S36, S39, S69, S79, and S132 each carry the phosphoserine modification. Residues 22-35 (DDSREHSFNRDLKH) are compositionally biased toward basic and acidic residues. The AH domain occupies 153–353 (TVDLELEAQI…NQKQLEQTLK (201 aa)). T361 bears the Phosphothreonine mark.

Forms homodimers or heterodimers with ARFIP2. Interacts with non-myristoylated GTP-bound ARF3, but not to GDP-bound ARF3. Interacts with ARF1. Binds with lower affinity to ARF5 and with very little affinity to ARF6. Interacts with ARL1. Interacts with ATG9A. Post-translationally, phosphorylated by PRKD1; phosphorylation delocalizes ARFIP1 from the Golgi and disrupts its ability to inhibit the activity of ADP-ribosylation factor, an important component of the vesicle scission machinery. In terms of tissue distribution, ubiquitously expressed. Higher levels in liver, pancreas, placenta, skeletal muscle and heart.

The protein localises to the golgi apparatus. Its subcellular location is the trans-Golgi network membrane. In terms of biological role, plays a role in controlling biogenesis of secretory granules at the trans-Golgi network. Mechanistically, binds ARF-GTP at the neck of a growing secretory granule precursor and forms a protective scaffold. Once the granule precursor has been completely loaded, active PRKD1 phosphorylates ARFIP1 and releases it from ARFs. In turn, ARFs induce fission. Through this mechanism, ensures proper secretory granule formation at the Golgi of pancreatic beta cells. The polypeptide is Arfaptin-1 (Homo sapiens (Human)).